Reading from the N-terminus, the 177-residue chain is Nucleoside-triphosphatase THEP1 (177 aa).

Residues 10–17 (GKPGIGKT) and 101–108 (CLVIDEIG) each bind ATP.

Belongs to the THEP1 NTPase family.

The enzyme catalyses a ribonucleoside 5'-triphosphate + H2O = a ribonucleoside 5'-diphosphate + phosphate + H(+). In terms of biological role, has nucleotide phosphatase activity towards ATP, GTP, CTP, TTP and UTP. May hydrolyze nucleoside diphosphates with lower efficiency. In Natranaerobius thermophilus (strain ATCC BAA-1301 / DSM 18059 / JW/NM-WN-LF), this protein is Nucleoside-triphosphatase THEP1.